Reading from the N-terminus, the 287-residue chain is 4-diphosphocytidyl-2-C-methyl-D-erythritol kinase (287 aa).

The active site involves K12. 94–104 (PAQAGMGGGSS) serves as a coordination point for ATP. The active site involves D136.

Belongs to the GHMP kinase family. IspE subfamily.

It carries out the reaction 4-CDP-2-C-methyl-D-erythritol + ATP = 4-CDP-2-C-methyl-D-erythritol 2-phosphate + ADP + H(+). It participates in isoprenoid biosynthesis; isopentenyl diphosphate biosynthesis via DXP pathway; isopentenyl diphosphate from 1-deoxy-D-xylulose 5-phosphate: step 3/6. Its function is as follows. Catalyzes the phosphorylation of the position 2 hydroxy group of 4-diphosphocytidyl-2C-methyl-D-erythritol. The chain is 4-diphosphocytidyl-2-C-methyl-D-erythritol kinase from Albidiferax ferrireducens (strain ATCC BAA-621 / DSM 15236 / T118) (Rhodoferax ferrireducens).